The following is a 330-amino-acid chain: Ketol-acid reductoisomerase (NADP(+)) (330 aa).

The region spanning 2–182 is the KARI N-terminal Rossmann domain; sequence ARLYYDTDAN…GGTRAGILET (181 aa). Residues 25–28, Ser51, Ser53, and 83–86 contribute to the NADP(+) site; these read YGSQ and DEVQ. The active site involves His108. Gly134 serves as a coordination point for NADP(+). Residues 183 to 328 enclose the KARI C-terminal knotted domain; the sequence is TFREETETDL…RELRAMFSWL (146 aa). Mg(2+)-binding residues include Asp191, Glu195, Glu227, and Glu231. Ser252 provides a ligand contact to substrate.

It belongs to the ketol-acid reductoisomerase family. Requires Mg(2+) as cofactor.

The enzyme catalyses (2R)-2,3-dihydroxy-3-methylbutanoate + NADP(+) = (2S)-2-acetolactate + NADPH + H(+). The catalysed reaction is (2R,3R)-2,3-dihydroxy-3-methylpentanoate + NADP(+) = (S)-2-ethyl-2-hydroxy-3-oxobutanoate + NADPH + H(+). It functions in the pathway amino-acid biosynthesis; L-isoleucine biosynthesis; L-isoleucine from 2-oxobutanoate: step 2/4. It participates in amino-acid biosynthesis; L-valine biosynthesis; L-valine from pyruvate: step 2/4. Its function is as follows. Involved in the biosynthesis of branched-chain amino acids (BCAA). Catalyzes an alkyl-migration followed by a ketol-acid reduction of (S)-2-acetolactate (S2AL) to yield (R)-2,3-dihydroxy-isovalerate. In the isomerase reaction, S2AL is rearranged via a Mg-dependent methyl migration to produce 3-hydroxy-3-methyl-2-ketobutyrate (HMKB). In the reductase reaction, this 2-ketoacid undergoes a metal-dependent reduction by NADPH to yield (R)-2,3-dihydroxy-isovalerate. The polypeptide is Ketol-acid reductoisomerase (NADP(+)) (Synechococcus sp. (strain JA-2-3B'a(2-13)) (Cyanobacteria bacterium Yellowstone B-Prime)).